A 303-amino-acid polypeptide reads, in one-letter code: Eukaryotic translation initiation factor 3 subunit G (303 aa).

4 disordered regions span residues 1–32 (MAAV…QTIV), 81–100 (GLSA…VGEN), 105–126 (PSAN…NAMK), and 181–215 (GAAG…AGGK). Basic and acidic residues predominate over residues 109 to 126 (WRKDQKDESKDANANAMK). The RRM domain maps to 223 to 301 (ATLRVTNVSE…LILRVEFAKK (79 aa)).

Belongs to the eIF-3 subunit G family. In terms of assembly, component of the eukaryotic translation initiation factor 3 (eIF-3) complex.

The protein resides in the cytoplasm. Its function is as follows. RNA-binding component of the eukaryotic translation initiation factor 3 (eIF-3) complex, which is involved in protein synthesis of a specialized repertoire of mRNAs and, together with other initiation factors, stimulates binding of mRNA and methionyl-tRNAi to the 40S ribosome. The eIF-3 complex specifically targets and initiates translation of a subset of mRNAs involved in cell proliferation. This subunit can bind 18S rRNA. The chain is Eukaryotic translation initiation factor 3 subunit G from Pyricularia oryzae (strain 70-15 / ATCC MYA-4617 / FGSC 8958) (Rice blast fungus).